The sequence spans 485 residues: Glutamyl-tRNA(Gln) amidotransferase subunit A (485 aa).

Catalysis depends on charge relay system residues Lys79 and Ser154. The active-site Acyl-ester intermediate is the Ser178.

It belongs to the amidase family. GatA subfamily. Heterotrimer of A, B and C subunits.

It carries out the reaction L-glutamyl-tRNA(Gln) + L-glutamine + ATP + H2O = L-glutaminyl-tRNA(Gln) + L-glutamate + ADP + phosphate + H(+). Its function is as follows. Allows the formation of correctly charged Gln-tRNA(Gln) through the transamidation of misacylated Glu-tRNA(Gln) in organisms which lack glutaminyl-tRNA synthetase. The reaction takes place in the presence of glutamine and ATP through an activated gamma-phospho-Glu-tRNA(Gln). This is Glutamyl-tRNA(Gln) amidotransferase subunit A from Staphylococcus aureus (strain MRSA252).